Here is a 502-residue protein sequence, read N- to C-terminus: Cytochrome P450 monooxygenase AacuE (502 aa).

The helical transmembrane segment at 4 to 26 threads the bilayer; that stretch reads AITGLVATVTTFLAYIVFLSYTP. An N-linked (GlcNAc...) asparagine glycan is attached at Asn-393. Cys-439 contributes to the heme binding site.

Belongs to the cytochrome P450 family. Requires heme as cofactor.

It is found in the membrane. The protein operates within secondary metabolite biosynthesis. In terms of biological role, cytochrome P450 monooxygenase; part of the gene cluster that mediates the biosynthesis of the tetrahydroxanthone dimer secalonic acid D. The pathway begins with the synthesis of atrochrysone thioester by the polyketide synthase AacuL. The atrochrysone carboxyl ACP thioesterase AacuM then breaks the thioester bond and releases the atrochrysone carboxylic acid from AacuL. Atrochrysone carboxylic acid is decarboxylated by the decarboxylase AacuI, and oxidized by the anthrone oxygenase AacuG to yield emodin. Emodin is then reduced to emodin hydroquinone by a yet unidentified oxidoreductase. A-ring reduction by the short chain dehydrogenase AacuN, dehydration by the scytalone dehydratase-like protein AacuK and probable spontaneous re-oxidation, results in overall deoxygenation to chrysophanol. Baeyer-Villiger oxidation by the Baeyer-Villiger monooxygenase (BVMO) AacuH then yields monodictyphenone. Monodictyphenone is transformed into compounds with the tetrahydroxanthone skeleton via methylesterification by the methyltransferase AacuQ, followed by the action of the flavin-dependent monooxygenase AacuC, the isomerase AacuP, and the short chain dehydrogenase/reductase AacuF or AacuD. AacuF and AacuD should accept the same compound as a substrate but perform the ketoreduction with a different stereoselectivity, thus yielding blennolides B and A, respectively. In the final step of the biosynthesis, the cytochrome P450 monooxygenase AacuE accepts blennolide B and/or blennolide A to conduct the dimerization reaction to furnish the tetrahydroxanthone dimers, secalonic acids D, B, and F. The sequence is that of Cytochrome P450 monooxygenase AacuE from Aspergillus aculeatus (strain ATCC 16872 / CBS 172.66 / WB 5094).